A 513-amino-acid polypeptide reads, in one-letter code: Alpha,alpha-trehalose-phosphate synthase [UDP-forming] (513 aa).

Tyrosine 40 bears the Phosphotyrosine mark. D-glucose 6-phosphate is bound by residues tyrosine 104 and aspartate 158. Residues arginine 294 and lysine 299 each contribute to the UDP site. 2 residues coordinate UDP-alpha-D-glucose: arginine 294 and lysine 299. Arginine 332 contributes to the D-glucose 6-phosphate binding site. UDP-alpha-D-glucose is bound at residue 393–401 (DGMNLVSYE). 397-401 (LVSYE) is a UDP binding site. Serine 503 bears the Phosphoserine mark.

Belongs to the glycosyltransferase 20 family. As to quaternary structure, homomer. Component of the trehalose synthase complex that contains at least tps1, ntp1 and tpp1. Interacts with tpp1. Interacts with ntp1; the interaction is independent of stress conditions.

It is found in the cytoplasm. It localises to the nucleus. It carries out the reaction D-glucose 6-phosphate + UDP-alpha-D-glucose = alpha,alpha-trehalose 6-phosphate + UDP + H(+). The protein operates within carbohydrate biosynthesis. Synthase catalytic subunit of the trehalose synthase complex that catalyzes the production of trehalose from glucose-6-phosphate and UDP-alpha-D-glucose in a two step process. The disaccharide trehalose serves as a storage carbohydrate that is mobilized during nutrient stress and spore germination. Together with ntp1, regulates the level of trehalose as a protectant for cell integrity during thermal and osmotic stress. The chain is Alpha,alpha-trehalose-phosphate synthase [UDP-forming] from Schizosaccharomyces pombe (strain 972 / ATCC 24843) (Fission yeast).